The sequence spans 192 residues: LexA repressor (192 aa).

Positions 15–35 form a DNA-binding region, H-T-H motif; it reads RAEIARELGFRSANAAEEHLK. Residues Ser109 and Lys146 each act as for autocatalytic cleavage activity in the active site.

The protein belongs to the peptidase S24 family. In terms of assembly, homodimer.

It carries out the reaction Hydrolysis of Ala-|-Gly bond in repressor LexA.. In terms of biological role, represses a number of genes involved in the response to DNA damage (SOS response), including recA and lexA. In the presence of single-stranded DNA, RecA interacts with LexA causing an autocatalytic cleavage which disrupts the DNA-binding part of LexA, leading to derepression of the SOS regulon and eventually DNA repair. The sequence is that of LexA repressor from Photobacterium profundum (strain SS9).